The sequence spans 182 residues: ADP-ribosylation factor-like protein 3 (182 aa).

Gly-2 carries N-myristoyl glycine lipidation. Ser-5 is subject to Phosphoserine. Residues 24 to 31, Thr-48, 67 to 71, Gly-70, 126 to 129, and 159 to 161 each bind GTP; these read GLDNAGKT, DIGGQ, NKQD, and SAL. The Mg(2+) site is built by Thr-31 and Thr-48.

The protein belongs to the small GTPase superfamily. Arf family. As to quaternary structure, found in a complex with ARL3, RP2 and UNC119 (or UNC119B); RP2 induces hydrolysis of GTP ARL3 in the complex, leading to the release of UNC119 (or UNC119B). Interacts with RP2; interaction is direct and stimulated with the activated GTP-bound form of ARL3. Interacts with SYS1. Interacts with ARL2BP; the GTP-bound form interacts with ARL2BP. Microtubule-associated protein. Does not interact with TBCC. Interacts with RP2. Interacts with PDE6D; the interaction occurs specifically with the GTP-bound form of ARL3. Interacts with GGA1; the interaction recruits PKD1:PKD2 complex to trans-Golgi network and is required for ciliary targeting of PKD1:PKD2 complex. Interacts with DNAAF9.

It localises to the golgi apparatus membrane. The protein localises to the cytoplasm. The protein resides in the cytoskeleton. It is found in the spindle. Its subcellular location is the nucleus. It localises to the microtubule organizing center. The protein localises to the centrosome. The protein resides in the cell projection. It is found in the cilium. Functionally, small GTP-binding protein which cycles between an inactive GDP-bound and an active GTP-bound form, and the rate of cycling is regulated by guanine nucleotide exchange factors (GEF) and GTPase-activating proteins (GAP). Required for normal cytokinesis and cilia signaling. Requires assistance from GTPase-activating proteins (GAPs) like RP2 and PDE6D, in order to cycle between inactive GDP-bound and active GTP-bound forms. Required for targeting proteins to the cilium, including myristoylated NPHP3 and prenylated INPP5E. Targets NPHP3 to the ciliary membrane by releasing myristoylated NPHP3 from UNC119B cargo adapter into the cilium. Required for PKD1:PKD2 complex targeting from the trans-Golgi network to the cilium. This is ADP-ribosylation factor-like protein 3 (ARL3) from Sus scrofa (Pig).